The sequence spans 364 residues: Alanine racemase (364 aa).

Lys-34 (proton acceptor; specific for D-alanine) is an active-site residue. Lys-34 carries the post-translational modification N6-(pyridoxal phosphate)lysine. Arg-129 provides a ligand contact to substrate. The active-site Proton acceptor; specific for L-alanine is Tyr-259. Met-307 serves as a coordination point for substrate.

It belongs to the alanine racemase family. The cofactor is pyridoxal 5'-phosphate.

The enzyme catalyses L-alanine = D-alanine. Its pathway is amino-acid biosynthesis; D-alanine biosynthesis; D-alanine from L-alanine: step 1/1. In terms of biological role, catalyzes the interconversion of L-alanine and D-alanine. May also act on other amino acids. This Coxiella burnetii (strain RSA 493 / Nine Mile phase I) protein is Alanine racemase (alr).